The chain runs to 204 residues: MTTVINRKYRISRRLGVNLWGRAKDSVNKRKYPPGQHGILGFKKLSDFGKQFAAHKKFKFYYAISSKQLRRTFLDAYKRKGYTADNFIGALESRLSSVLYHSGFVPTIYSAKQLISHKHVTVNDKVVNISSYRVKPGDIVKIRERAAKIPILIEAEQKQERKAPDYLEADSKALSVKYLRAPQYSEVPYSADMEVNLVVEFYSR.

In terms of domain architecture, S4 RNA-binding spans 93 to 156 (SRLSSVLYHS…AKIPILIEAE (64 aa)).

Belongs to the universal ribosomal protein uS4 family. Part of the 30S ribosomal subunit. Contacts protein S5. The interaction surface between S4 and S5 is involved in control of translational fidelity.

In terms of biological role, one of the primary rRNA binding proteins, it binds directly to 16S rRNA where it nucleates assembly of the body of the 30S subunit. Its function is as follows. With S5 and S12 plays an important role in translational accuracy. The polypeptide is Small ribosomal subunit protein uS4 (Wolbachia pipientis subsp. Culex pipiens (strain wPip)).